The chain runs to 209 residues: Holliday junction branch migration complex subunit RuvA (209 aa).

The tract at residues 1-70 (MINYLRGQAI…EEQPLLYGFG (70 aa)) is domain I. Residues 71–149 (TAPERELFRQ…AWRQLREATT (79 aa)) are domain II. Residues 150 to 158 (TITAILPAA) form a flexible linker region. The tract at residues 158-209 (AAILEDVQMTLLALGYSQEEIDRAMAVLSQDALFSKNTQPEDWIKGAINWLG) is domain III.

This sequence belongs to the RuvA family. Homotetramer. Forms an RuvA(8)-RuvB(12)-Holliday junction (HJ) complex. HJ DNA is sandwiched between 2 RuvA tetramers; dsDNA enters through RuvA and exits via RuvB. An RuvB hexamer assembles on each DNA strand where it exits the tetramer. Each RuvB hexamer is contacted by two RuvA subunits (via domain III) on 2 adjacent RuvB subunits; this complex drives branch migration. In the full resolvosome a probable DNA-RuvA(4)-RuvB(12)-RuvC(2) complex forms which resolves the HJ.

Its subcellular location is the cytoplasm. Its function is as follows. The RuvA-RuvB-RuvC complex processes Holliday junction (HJ) DNA during genetic recombination and DNA repair, while the RuvA-RuvB complex plays an important role in the rescue of blocked DNA replication forks via replication fork reversal (RFR). RuvA specifically binds to HJ cruciform DNA, conferring on it an open structure. The RuvB hexamer acts as an ATP-dependent pump, pulling dsDNA into and through the RuvAB complex. HJ branch migration allows RuvC to scan DNA until it finds its consensus sequence, where it cleaves and resolves the cruciform DNA. In Microcystis aeruginosa (strain NIES-843 / IAM M-2473), this protein is Holliday junction branch migration complex subunit RuvA.